The chain runs to 226 residues: Urease accessory protein UreF (226 aa).

The protein belongs to the UreF family. In terms of assembly, ureD, UreF and UreG form a complex that acts as a GTP-hydrolysis-dependent molecular chaperone, activating the urease apoprotein by helping to assemble the nickel containing metallocenter of UreC. The UreE protein probably delivers the nickel.

It is found in the cytoplasm. In terms of biological role, required for maturation of urease via the functional incorporation of the urease nickel metallocenter. The chain is Urease accessory protein UreF from Nitrosospira multiformis (strain ATCC 25196 / NCIMB 11849 / C 71).